We begin with the raw amino-acid sequence, 347 residues long: Phosphoribosylformylglycinamidine cyclo-ligase (347 aa).

The protein belongs to the AIR synthase family.

The protein localises to the cytoplasm. The enzyme catalyses 2-formamido-N(1)-(5-O-phospho-beta-D-ribosyl)acetamidine + ATP = 5-amino-1-(5-phospho-beta-D-ribosyl)imidazole + ADP + phosphate + H(+). Its pathway is purine metabolism; IMP biosynthesis via de novo pathway; 5-amino-1-(5-phospho-D-ribosyl)imidazole from N(2)-formyl-N(1)-(5-phospho-D-ribosyl)glycinamide: step 2/2. The protein is Phosphoribosylformylglycinamidine cyclo-ligase of Syntrophus aciditrophicus (strain SB).